The primary structure comprises 260 residues: Uroplakin-1b (260 aa).

Residues 1–15 lie on the Cytoplasmic side of the membrane; the sequence is MAKDDSTVRCFQGLL. Residues 16 to 36 form a helical membrane-spanning segment; that stretch reads IFGHVIVGMCGIALTAECIFF. Residues 37–59 are Extracellular-facing; it reads VSDQHSLYPLLEATNNDDIFGAA. Residues 60–80 traverse the membrane as a helical segment; sequence WIGMFVGICLFCLSVLAIVGI. At 81–86 the chain is on the cytoplasmic side; the sequence is MKSNRK. A helical membrane pass occupies residues 87 to 107; the sequence is ILLAYFIMMFIVYGFEVASCI. The Extracellular portion of the chain corresponds to 108–229; sequence TAATQRDFFT…ELISGPMDRH (122 aa). A helical transmembrane segment spans residues 230–250; the sequence is AWGVAWFGFAILCWTFWVLLG. The Cytoplasmic segment spans residues 251 to 260; that stretch reads TMFYWSRIEY.

The protein belongs to the tetraspanin (TM4SF) family. Heterodimer with uroplakin-3A (UPK3A) or uroplakin-3B (UPK3B). Post-translationally, N-glycosylated with high-mannose oligosaccharides.

It is found in the membrane. Functionally, component of the asymmetric unit membrane (AUM); a highly specialized biomembrane elaborated by terminally differentiated urothelial cells. May play an important role in normal bladder epithelial physiology, possibly in regulating membrane permeability of superficial umbrella cells or in stabilizing the apical membrane through AUM/cytoskeletal interactions. The protein is Uroplakin-1b (Upk1b) of Rattus norvegicus (Rat).